The chain runs to 158 residues: SH3 domain-binding glutamic acid-rich protein homolog (158 aa).

A compositionally biased stretch (basic and acidic residues) spans 40–51 (TEPGKESEKELM). The segment at 40 to 74 (TEPGKESEKELMQNKSTSNGGTVSDPEPRHPLPPQ) is disordered. The segment covering 52 to 61 (QNKSTSNGGT) has biased composition (polar residues). The SH3-binding signature appears at 67 to 73 (PRHPLPP). The residue at position 109 (threonine 109) is a Phosphothreonine. Positions 118–158 (LKQENGDAKKEEAETEAEDKKTEAGDGDVDVKEEAAEKAEV) are disordered.

Belongs to the SH3BGR family.

This is SH3 domain-binding glutamic acid-rich protein homolog (Sh3beta) from Drosophila melanogaster (Fruit fly).